Here is a 236-residue protein sequence, read N- to C-terminus: Protein CUSTOS (236 aa).

2 disordered regions span residues 1–57 (MSES…GTTP) and 83–236 (VEPA…KKDE). Composition is skewed to basic and acidic residues over residues 10-51 (NTAR…HDGN) and 156-165 (EKTEEKSTKE). The Nucleolar localization signal (NLS1) signature appears at 173 to 181 (KMKKKKKRK). Over residues 182–196 (TSSEESQDKVNHQTE) the composition is skewed to basic and acidic residues. A compositionally biased stretch (polar residues) spans 197–210 (KQSNVEGNQEQTTA). Residues 211–219 (GERLKKKKK) carry the Nucleolar localization signal (NLS2) motif. Positions 214–227 (LKKKKKKKKKKRKK) are enriched in basic residues.

Belongs to the CUSTOS family. As to quaternary structure, interacts (via NLS1 and NLS2) with dvl2; the interaction is negatively regulated by Wnt stimulation. Interacts with csnk1a1. Interacts with ctnnb1; the interaction is positively regulated by Wnt stimulation. In terms of processing, phosphorylated by ck1/csnk1a1.

The protein resides in the nucleus envelope. Essential for Spemann-Mangold organizer formation and subsequent anterior head development in the embryo. Inhibits canonical Wnt signaling pathway by antagonizing nuclear import of beta-catenin (ctnnb1) during embryogenesis. The sequence is that of Protein CUSTOS from Danio rerio (Zebrafish).